A 217-amino-acid polypeptide reads, in one-letter code: MEIERINEDTIKFYISYLDLEERGFNQEDVWYDREKSEELFWDMMDELKYEEEFSPEGPLWIQVQALKHGLEVFVTKATIGGKGEDGFDVTLSSPDELAEEKIEKLLEENFNPVKKEALGDDDTLEFILEFRDFEDAISLSRATGLENLVTKLYSYQGKYYLNVEFPENKYDESNIDNAVSILLEYGLESNLTGYMLAEYGKVIFDVPALKQIRKHF.

Belongs to the MecA family. Homodimer.

Its function is as follows. Enables the recognition and targeting of unfolded and aggregated proteins to the ClpC protease or to other proteins involved in proteolysis. This is Adapter protein MecA from Listeria monocytogenes serotype 4b (strain CLIP80459).